Consider the following 400-residue polypeptide: tRNA(Met) cytidine acetate ligase (400 aa).

ATP contacts are provided by residues 7–20 (IVEYNPFHNGHLYH), Gly101, Asn159, and Arg184.

This sequence belongs to the TmcAL family.

Its subcellular location is the cytoplasm. It catalyses the reaction cytidine(34) in elongator tRNA(Met) + acetate + ATP = N(4)-acetylcytidine(34) in elongator tRNA(Met) + AMP + diphosphate. Catalyzes the formation of N(4)-acetylcytidine (ac(4)C) at the wobble position of elongator tRNA(Met), using acetate and ATP as substrates. First activates an acetate ion to form acetyladenylate (Ac-AMP) and then transfers the acetyl group to tRNA to form ac(4)C34. This is tRNA(Met) cytidine acetate ligase from Caldicellulosiruptor saccharolyticus (strain ATCC 43494 / DSM 8903 / Tp8T 6331).